The primary structure comprises 302 residues: Sulfate adenylyltransferase subunit 2 (302 aa).

The protein belongs to the PAPS reductase family. CysD subfamily. In terms of assembly, heterodimer composed of CysD, the smaller subunit, and CysN.

The catalysed reaction is sulfate + ATP + H(+) = adenosine 5'-phosphosulfate + diphosphate. It functions in the pathway sulfur metabolism; hydrogen sulfide biosynthesis; sulfite from sulfate: step 1/3. With CysN forms the ATP sulfurylase (ATPS) that catalyzes the adenylation of sulfate producing adenosine 5'-phosphosulfate (APS) and diphosphate, the first enzymatic step in sulfur assimilation pathway. APS synthesis involves the formation of a high-energy phosphoric-sulfuric acid anhydride bond driven by GTP hydrolysis by CysN coupled to ATP hydrolysis by CysD. The sequence is that of Sulfate adenylyltransferase subunit 2 from Parabacteroides distasonis (strain ATCC 8503 / DSM 20701 / CIP 104284 / JCM 5825 / NCTC 11152).